The sequence spans 304 residues: Coenzyme PQQ synthesis protein B (304 aa).

The protein belongs to the PqqB family.

The protein operates within cofactor biosynthesis; pyrroloquinoline quinone biosynthesis. May be involved in the transport of PQQ or its precursor to the periplasm. The polypeptide is Coenzyme PQQ synthesis protein B (Stutzerimonas stutzeri (Pseudomonas stutzeri)).